Reading from the N-terminus, the 125-residue chain is Small ribosomal subunit protein eS8 (125 aa).

It belongs to the eukaryotic ribosomal protein eS8 family. As to quaternary structure, part of the 30S ribosomal subunit.

The polypeptide is Small ribosomal subunit protein eS8 (Methanosarcina barkeri (strain Fusaro / DSM 804)).